Consider the following 2350-residue polypeptide: Probable JmjC domain-containing histone demethylation protein 2C (2350 aa).

Disordered stretches follow at residues 96-302 (TRAQ…LQEC) and 314-336 (PKDR…NDTH). Positions 98–127 (AQANSPRPAMNSQAAVPKQNTHQQQQQRSI) are enriched in polar residues. A phosphoserine mark is found at S135 and S138. Residues 141–160 (DEEKMKEDKYDCVSRGENPK) show a composition bias toward basic and acidic residues. Residues 161–171 (GKNKHVVTKRR) are compositionally biased toward basic residues. The span at 172–189 (KPEEAEKRLSMKRLRTDN) shows a compositional bias: basic and acidic residues. A compositionally biased stretch (low complexity) spans 190–200 (ASDASESSDAE). A phosphoserine mark is found at S191 and S194. The span at 257–280 (QEDKNHNEGEKPKSTDSHLQDKMT) shows a compositional bias: basic and acidic residues. Positions 281 to 302 (LRSSEQATVADHNSNDSVLQEC) are enriched in polar residues. A phosphoserine mark is found at S294 and S320. Position 324 is a phosphothreonine (T324). 7 positions are modified to phosphoserine: S420, S436, S457, S458, S460, S471, and S762. Disordered stretches follow at residues 426 to 486 (SVTE…NSQA), 747 to 766 (SSAE…PPLT), 859 to 883 (RENY…DKDV), 1030 to 1083 (RKES…DQSL), and 1422 to 1508 (EKVS…VPRS). 2 stretches are compositionally biased toward low complexity: residues 863–874 (SRVVPSSSSPKS) and 1034–1045 (SYSSLSPPTLTP). Polar residues predominate over residues 1071–1083 (SQSNFKNSSDQSL). Over residues 1454 to 1463 (KRQPKPTYKK) the composition is skewed to basic residues. Residues 1464–1480 (KQNDLQKRKGEVEEDSK) show a composition bias toward basic and acidic residues. A C6-type zinc finger spans residues 1657–1682 (CDACEATLFNVHWVCRKCGFVACLDC). The segment covering 1776-1818 (KTSVSLPESQQQNSPQKSQTNGNSSPGSASTDSRLTPPESQSP) has biased composition (polar residues). The disordered stretch occupies residues 1776–1874 (KTSVSLPESQ…PASQSNEQGS (99 aa)). S1800 is modified (phosphoserine). Residues 1826 to 1849 (AEQKSREEKQENKEFTLEREIKED) show a composition bias toward basic and acidic residues. Polar residues predominate over residues 1855 to 1874 (SDSPNGSTSPPASQSNEQGS). An LXXLL motif motif is present at residues 1876–1880 (LRDLL). The interval 1933–1962 (PNKTSKINIKSEPNEEPKESSLPATDESNK) is disordered. K1942 is covalently cross-linked (Glycyl lysine isopeptide (Lys-Gly) (interchain with G-Cter in SUMO2)). One can recognise a JmjC domain in the interval 2084 to 2308 (MPTRYEDFLR…QSFHLTQELR (225 aa)). Residues H2146, E2148, and H2276 each contribute to the Fe cation site.

This sequence belongs to the JHDM2 histone demethylase family. Fe(2+) serves as cofactor.

It localises to the nucleus. Its function is as follows. Probable histone demethylase that specifically demethylates 'Lys-9' of histone H3, thereby playing a central role in histone code. Demethylation of Lys residue generates formaldehyde and succinate. May be involved in hormone-dependent transcriptional activation, by participating in recruitment to androgen-receptor target genes. The protein is Probable JmjC domain-containing histone demethylation protein 2C (Jmjd1c) of Mus musculus (Mouse).